We begin with the raw amino-acid sequence, 293 residues long: Nitrogenase iron protein (293 aa).

Residue 10 to 17 coordinates ATP; it reads GKGGIGKS. Cys-98 contacts [4Fe-4S] cluster. Arg-101 carries the ADP-ribosylarginine; by dinitrogenase reductase ADP-ribosyltransferase modification. Residue Cys-133 coordinates [4Fe-4S] cluster.

It belongs to the NifH/BchL/ChlL family. As to quaternary structure, homodimer. [4Fe-4S] cluster serves as cofactor. Post-translationally, the reversible ADP-ribosylation of Arg-101 inactivates the nitrogenase reductase and regulates nitrogenase activity.

It catalyses the reaction N2 + 8 reduced [2Fe-2S]-[ferredoxin] + 16 ATP + 16 H2O = H2 + 8 oxidized [2Fe-2S]-[ferredoxin] + 2 NH4(+) + 16 ADP + 16 phosphate + 6 H(+). In terms of biological role, the key enzymatic reactions in nitrogen fixation are catalyzed by the nitrogenase complex, which has 2 components: the iron protein and the molybdenum-iron protein. This Klebsiella pneumoniae (strain 342) protein is Nitrogenase iron protein.